The chain runs to 344 residues: Small ribosomal subunit protein bS1m (344 aa).

At S327 the chain carries Phosphoserine.

It belongs to the bacterial ribosomal protein bS1 family. Component of the mitochondrial small ribosomal subunit (mt-SSU). Mature yeast 74S mitochondrial ribosomes consist of a small (37S) and a large (54S) subunit. The 37S small subunit contains a 15S ribosomal RNA (15S mt-rRNA) and 34 different proteins. The 54S large subunit contains a 21S rRNA (21S mt-rRNA) and 46 different proteins.

The protein localises to the mitochondrion. Functionally, component of the mitochondrial ribosome (mitoribosome), a dedicated translation machinery responsible for the synthesis of mitochondrial genome-encoded proteins, including at least some of the essential transmembrane subunits of the mitochondrial respiratory chain. The mitoribosomes are attached to the mitochondrial inner membrane and translation products are cotranslationally integrated into the membrane. bS1m functionally interacts with the 5'-UTR of mitochondrial mRNAs. This is Small ribosomal subunit protein bS1m (MRP51) from Saccharomyces cerevisiae (strain ATCC 204508 / S288c) (Baker's yeast).